Consider the following 466-residue polypeptide: ATP synthase subunit beta (466 aa).

G156 to T163 is a binding site for ATP.

Belongs to the ATPase alpha/beta chains family. In terms of assembly, F-type ATPases have 2 components, CF(1) - the catalytic core - and CF(0) - the membrane proton channel. CF(1) has five subunits: alpha(3), beta(3), gamma(1), delta(1), epsilon(1). CF(0) has three main subunits: a(1), b(2) and c(9-12). The alpha and beta chains form an alternating ring which encloses part of the gamma chain. CF(1) is attached to CF(0) by a central stalk formed by the gamma and epsilon chains, while a peripheral stalk is formed by the delta and b chains.

It is found in the cell membrane. It carries out the reaction ATP + H2O + 4 H(+)(in) = ADP + phosphate + 5 H(+)(out). Functionally, produces ATP from ADP in the presence of a proton gradient across the membrane. The catalytic sites are hosted primarily by the beta subunits. The sequence is that of ATP synthase subunit beta from Polynucleobacter asymbioticus (strain DSM 18221 / CIP 109841 / QLW-P1DMWA-1) (Polynucleobacter necessarius subsp. asymbioticus).